Consider the following 655-residue polypeptide: Putative phagocytic receptor 1c (655 aa).

The N-terminal stretch at 1 to 20 (MLNIIVVLLLLFFSNNVIDS) is a signal peptide. A compositionally biased stretch (low complexity) spans 146-173 (SNSKSSEITSPPSSPSSSSSSSSSPSSS). Residues 146 to 185 (SNSKSSEITSPPSSPSSSSSSSSSPSSSIEEEDDDDTEND) are disordered. Acidic residues predominate over residues 174–183 (IEEEDDDDTE). The next 9 membrane-spanning stretches (helical) occupy residues 300–320 (IDII…AIIL), 359–379 (FSII…LMVF), 387–407 (IATP…TGIF), 428–448 (SVIT…IGYF), 461–481 (IGTV…CSLL), 518–538 (MILG…FFLS), 550–570 (LSFA…NMII), 587–607 (LLGP…FGIT), and 619–639 (FMFS…IGFL).

This sequence belongs to the nonaspanin (TM9SF) (TC 9.A.2) family.

Its subcellular location is the membrane. The protein is Putative phagocytic receptor 1c (phg1c) of Dictyostelium discoideum (Social amoeba).